Consider the following 714-residue polypeptide: Neutral ceramidase A (714 aa).

A signal peptide spans 1 to 23 (MKRSIVFIYSLVILLLSVGFIDA). Residues Asn-218 and Asn-246 are each glycosylated (N-linked (GlcNAc...) asparagine). Ser-293 serves as the catalytic Nucleophile. N-linked (GlcNAc...) asparagine glycosylation is found at Asn-353, Asn-373, Asn-416, Asn-571, Asn-610, and Asn-700.

It belongs to the neutral ceramidase family.

It is found in the secreted. It carries out the reaction an N-acylsphing-4-enine + H2O = sphing-4-enine + a fatty acid. Hydrolyzes the sphingolipid ceramide into sphingosine and free fatty acid at an optimal pH of 3.0. Has no activity toward glycosphingolipids, such as GalCer and Galbeta1-3GalNAcbeta1-4(NeuAcalpha2-3)Galbeta1-4Glcbeta1-1'Cer or sphingomyelin. This chain is Neutral ceramidase A (dcd2A), found in Dictyostelium discoideum (Social amoeba).